The primary structure comprises 141 residues: ATP synthase F(0) complex subunit C3, mitochondrial (141 aa).

The transit peptide at 1–66 directs the protein to the mitochondrion; it reads MFACAKLART…REFQTSVISR (66 aa). Residues 82 to 102 form a helical membrane-spanning segment; that stretch reads VGVAGSGAGIGTVFGSLIIGY. K109 bears the N6,N6,N6-trimethyllysine mark. The chain crosses the membrane as a helical span at residues 117-137; the sequence is ILGFALSEAMGLFCLMVAFLI.

Belongs to the ATPase C chain family. F-type ATPases have 2 components, CF(1) - the catalytic core - and CF(0) - the membrane proton channel. CF(1) has five subunits: alpha(3), beta(3), gamma(1), delta(1), epsilon(1). CF(0) has three main subunits: a, b and c. Interacts with TMEM70 and TMEM242. Post-translationally, trimethylated by ATPSCKMT at Lys-109. Methylation is required for proper incorporation of the C subunit into the ATP synthase complex and mitochondrial respiration.

It localises to the mitochondrion membrane. Mitochondrial membrane ATP synthase (F(1)F(0) ATP synthase or Complex V) produces ATP from ADP in the presence of a proton gradient across the membrane which is generated by electron transport complexes of the respiratory chain. F-type ATPases consist of two structural domains, F(1) - containing the extramembraneous catalytic core and F(0) - containing the membrane proton channel, linked together by a central stalk and a peripheral stalk. During catalysis, ATP synthesis in the catalytic domain of F(1) is coupled via a rotary mechanism of the central stalk subunits to proton translocation. Part of the complex F(0) domain. A homomeric c-ring of probably 10 subunits is part of the complex rotary element. The sequence is that of ATP synthase F(0) complex subunit C3, mitochondrial from Mus musculus (Mouse).